The following is a 154-amino-acid chain: 6,7-dimethyl-8-ribityllumazine synthase (154 aa).

5-amino-6-(D-ribitylamino)uracil is bound by residues Phe-22, 57–59 (AYE), and 81–83 (AVI). 86 to 87 (GT) is a (2S)-2-hydroxy-3-oxobutyl phosphate binding site. His-89 acts as the Proton donor in catalysis. Phe-114 serves as a coordination point for 5-amino-6-(D-ribitylamino)uracil. Arg-128 is a binding site for (2S)-2-hydroxy-3-oxobutyl phosphate.

Belongs to the DMRL synthase family. In terms of assembly, forms an icosahedral capsid composed of 60 subunits, arranged as a dodecamer of pentamers.

It catalyses the reaction (2S)-2-hydroxy-3-oxobutyl phosphate + 5-amino-6-(D-ribitylamino)uracil = 6,7-dimethyl-8-(1-D-ribityl)lumazine + phosphate + 2 H2O + H(+). It functions in the pathway cofactor biosynthesis; riboflavin biosynthesis; riboflavin from 2-hydroxy-3-oxobutyl phosphate and 5-amino-6-(D-ribitylamino)uracil: step 1/2. Functionally, catalyzes the formation of 6,7-dimethyl-8-ribityllumazine by condensation of 5-amino-6-(D-ribitylamino)uracil with 3,4-dihydroxy-2-butanone 4-phosphate. This is the penultimate step in the biosynthesis of riboflavin. This Idiomarina loihiensis (strain ATCC BAA-735 / DSM 15497 / L2-TR) protein is 6,7-dimethyl-8-ribityllumazine synthase.